The following is a 142-amino-acid chain: Group IIE secretory phospholipase A2 (142 aa).

The first 19 residues, 1 to 19, serve as a signal peptide directing secretion; it reads MKPPIALACLCLLVPLAGG. Ca(2+)-binding residues include D41, G43, Y45, G47, and G49. 7 disulfides stabilise this stretch: C44–C135, C46–C62, C61–C115, C67–C142, C68–C108, C77–C101, and C95–C106. The active site involves H65. D66 serves as a coordination point for Ca(2+). Residue D109 is part of the active site. The Ca(2+) site is built by Y130 and N132.

The protein belongs to the phospholipase A2 family. Ca(2+) is required as a cofactor. As to expression, highly expressed in skin and uterus, and at lower levels in various other tissues. Expressed in hair follicles, specifically localized in companion cells of the outer root sheath and cuticular cells of the inner root sheath in hair follicles during anagen. Expressed in white and brown adipose tissue.

It is found in the secreted. The protein localises to the cytoplasm. It catalyses the reaction a 1,2-diacyl-sn-glycero-3-phosphoethanolamine + H2O = a 1-acyl-sn-glycero-3-phosphoethanolamine + a fatty acid + H(+). It carries out the reaction 1-hexadecanoyl-2-(9Z-octadecenoyl)-sn-glycero-3-phosphoethanolamine + H2O = 1-hexadecanoyl-sn-glycero-3-phosphoethanolamine + (9Z)-octadecenoate + H(+). The catalysed reaction is 1-hexadecanoyl-2-(9Z,12Z-octadecadienoyl)-sn-glycero-3-phosphoethanolamine + H2O = 1-hexadecanoyl-sn-glycero-3-phosphoethanolamine + (9Z,12Z)-octadecadienoate + H(+). The enzyme catalyses 1-hexadecanoyl-2-(5Z,8Z,11Z,14Z-eicosatetraenoyl)-sn-glycero-3-phosphoethanolamine + H2O = 1-hexadecanoyl-sn-glycero-3-phosphoethanolamine + (5Z,8Z,11Z,14Z)-eicosatetraenoate + H(+). It catalyses the reaction 1,2-dihexadecanoyl-sn-glycero-3-phospho-(1'-sn-glycerol) + H2O = 1-hexadecanoyl-sn-glycero-3-phospho-(1'-sn-glycerol) + hexadecanoate + H(+). It carries out the reaction 1-hexadecanoyl-2-(9Z-octadecenoyl)-sn-glycero-3-phosphoglycerol + H2O = 1-hexadecanoyl-sn-glycero-3-phosphoglycerol + (9Z)-octadecenoate + H(+). The catalysed reaction is a 1,2-diacyl-sn-glycero-3-phosphocholine + H2O = a 1-acyl-sn-glycero-3-phosphocholine + a fatty acid + H(+). The enzyme catalyses 1,2-dihexadecanoyl-sn-glycero-3-phosphocholine + H2O = 1-hexadecanoyl-sn-glycero-3-phosphocholine + hexadecanoate + H(+). It catalyses the reaction 1-hexadecanoyl-2-(9Z-octadecenoyl)-sn-glycero-3-phosphocholine + H2O = 1-hexadecanoyl-sn-glycero-3-phosphocholine + (9Z)-octadecenoate + H(+). It carries out the reaction 1-hexadecanoyl-2-(9Z,12Z-octadecadienoyl)-sn-glycero-3-phosphocholine + H2O = (9Z,12Z)-octadecadienoate + 1-hexadecanoyl-sn-glycero-3-phosphocholine + H(+). The catalysed reaction is 1-hexadecanoyl-2-(4Z,7Z,10Z,13Z,16Z,19Z-docosahexaenoyl)-sn-glycero-3-phosphocholine + H2O = (4Z,7Z,10Z,13Z,16Z,19Z)-docosahexaenoate + 1-hexadecanoyl-sn-glycero-3-phosphocholine + H(+). Functionally, secretory calcium-dependent phospholipase A2 that primarily targets extracellular phospholipids. Hydrolyzes the ester bond of the fatty acyl group attached at sn-2 position of phospholipids (phospholipase A2 activity), releasing various unsaturated fatty acids including oleoate, linoleoate, arachidonate, docosahexaenoate and lysophosphatidylethanolamines in preference to lysophosphatidylcholines. In response to high-fat diet, hydrolyzes minor lipoprotein phospholipids including phosphatidylserines, phosphatidylinositols and phosphatidylglycerols, altering lipoprotein composition and fat storage in adipose tissue and liver. May act in an autocrine and paracrine manner. Contributes to lipid remodeling of cellular membranes and generation of lipid mediators involved in pathogen clearance. Cleaves sn-2 fatty acyl chains of phosphatidylglycerols and phosphatidylethanolamines, which are major components of membrane phospholipids in bacteria. Acts as a hair follicle phospholipase A2. Selectively releases lysophosphatidylethanolamines (LPE) and various unsaturated fatty acids in skin to regulate hair follicle homeostasis. May regulate the inflammatory response by releasing arachidonate, a precursor of prostaglandins and leukotrienes. Upon allergen exposure, may participate in allergic inflammatory response by enhancing leukotriene C4 synthesis and degranulation in mast cells. In Mus musculus (Mouse), this protein is Group IIE secretory phospholipase A2 (Pla2g2e).